Reading from the N-terminus, the 340-residue chain is Transcription initiation factor IIB (340 aa).

A TFIIB-type zinc finger spans residues 16–49 (VKMICSECREDPPNLVEEFSSGDTVCGSCGLVLG). Cys20, Cys23, Cys41, and Cys44 together coordinate Zn(2+). Repeat copies occupy residues 128–204 (MCDA…TLQR) and 239–315 (FCNR…LLHA).

Belongs to the TFIIB family. In terms of assembly, associates with TFIID-IIA (DA complex) to form TFIID-IIA-IIB (DAB-complex) which is then recognized by polymerase II.

It is found in the nucleus. In terms of biological role, general factor that plays a major role in the activation of eukaryotic genes transcribed by RNA polymerase II. This chain is Transcription initiation factor IIB (sua7), found in Schizosaccharomyces pombe (strain 972 / ATCC 24843) (Fission yeast).